We begin with the raw amino-acid sequence, 251 residues long: POU class 2 homeobox associating factor 3 (251 aa).

An OCA domain is found at 5–27 (PKVYQGVRVKITVKELLQQRRAH). The segment at 24–45 (RRAHQAASGGTRSGGSSVHLSD) is disordered. Residues 31 to 40 (SGGTRSGGSS) show a composition bias toward low complexity.

This sequence belongs to the POU2AF family. Interacts with POU2F3 in a DNA-dependent manner; this interaction increases POU2F3 transactivation activity. In terms of tissue distribution, expressed in many cell types of epithelial, mesenchymal and hematopoietic origins. Expressed in tufs cells.

The protein localises to the cytoplasm. It is found in the nucleus. Its function is as follows. Transcriptional coactivator that specifically associates with POU2F3. This complex drives the development of tuft cells, a rare a rare chemosensory cells that coordinate immune and neural functions within mucosal epithelial tissues. This is POU class 2 homeobox associating factor 3 from Homo sapiens (Human).